A 195-amino-acid chain; its full sequence is Holliday junction branch migration complex subunit RuvA (195 aa).

The domain I stretch occupies residues 1-64; sequence MIKGVEGEIT…DRAPEIYGFK (64 aa). The interval 65-137 is domain II; sequence DRAEYNVFLM…LYDLVKDYAV (73 aa). The tract at residues 137–141 is flexible linker; sequence VEFPK. Residues 142–195 form a domain III region; sequence ELSDVSEDAVGALTALGFDMTSAKLAVNEVLKEQTVENTQELVRKALRKLNKTR.

The protein belongs to the RuvA family. Homotetramer. Forms an RuvA(8)-RuvB(12)-Holliday junction (HJ) complex. HJ DNA is sandwiched between 2 RuvA tetramers; dsDNA enters through RuvA and exits via RuvB. An RuvB hexamer assembles on each DNA strand where it exits the tetramer. Each RuvB hexamer is contacted by two RuvA subunits (via domain III) on 2 adjacent RuvB subunits; this complex drives branch migration. In the full resolvosome a probable DNA-RuvA(4)-RuvB(12)-RuvC(2) complex forms which resolves the HJ.

The protein localises to the cytoplasm. In terms of biological role, the RuvA-RuvB-RuvC complex processes Holliday junction (HJ) DNA during genetic recombination and DNA repair, while the RuvA-RuvB complex plays an important role in the rescue of blocked DNA replication forks via replication fork reversal (RFR). RuvA specifically binds to HJ cruciform DNA, conferring on it an open structure. The RuvB hexamer acts as an ATP-dependent pump, pulling dsDNA into and through the RuvAB complex. HJ branch migration allows RuvC to scan DNA until it finds its consensus sequence, where it cleaves and resolves the cruciform DNA. This chain is Holliday junction branch migration complex subunit RuvA, found in Kosmotoga olearia (strain ATCC BAA-1733 / DSM 21960 / TBF 19.5.1).